Reading from the N-terminus, the 431-residue chain is MRYQRPKGTADILPGDSQTWQYVEGQARQIFKTYGYQEIRTPLFESYDIFSRSAGDTSDVVTKEMYDFKDKGDRHIALRPEGTAGVVRAFVENKLYGPEFNKPYKVYYIGPMFRYERPQSGRQREFHQIGVEAFGADNPAVDVEVITMALRFFKKLGLSDLRVAVNSLGDQESRANYRQALIDYLKPHYDELSEDSKERLEKNPLRVLDSKDERDQQFVENAPSILDYLTPAAAERFDQVKEMLDSLGIDYVVDATMVRGLDYYNHTIFEVMVKAKSLGHGYTTICGGGRYSGLVEELGGPDEPGVGFGIGLERLILLLGDEGVELPTEDGLDVYVVGIGEATNLESFRLVTAARDAGLVAERDYLNRKPKAQFKTAAKEGAKVTLTVGQREIEEGTVHFKVMATGKEVSVPLADCLADFGKVYQEHVEEG.

It belongs to the class-II aminoacyl-tRNA synthetase family. As to quaternary structure, homodimer.

The protein resides in the cytoplasm. It carries out the reaction tRNA(His) + L-histidine + ATP = L-histidyl-tRNA(His) + AMP + diphosphate + H(+). This Limosilactobacillus fermentum (strain NBRC 3956 / LMG 18251) (Lactobacillus fermentum) protein is Histidine--tRNA ligase.